The chain runs to 194 residues: Heme transporter hrg-1 (194 aa).

4 helical membrane passes run 45 to 65 (QIWIAWLGVSAGVMAGTVFAI), 71 to 91 (IAVTMCFISSGFATLVLHLHL), 113 to 133 (GATVSFLSFIAMVFCLVVAGI), and 143 to 163 (LMGANLWIAAVWFFMTSKWSA). The Di-leucine motif signature appears at 182–183 (LL).

This sequence belongs to the HRG family. Specifically expressed in the intestinal cells in larvae and adults.

It localises to the endosome membrane. Its subcellular location is the lysosome membrane. Functionally, heme transporter that regulates intracellular heme availability through the endosomal or lysosomal compartment. This chain is Heme transporter hrg-1 (hrg-1), found in Caenorhabditis elegans.